The primary structure comprises 38 residues: Conotoxin r7a (38 aa).

Positions 1–5 (APAKR) are excised as a propeptide. A 6'-bromotryptophan modification is found at tryptophan 6. 2 positions are modified to 4-carboxyglutamate: glutamate 10 and glutamate 11. Disulfide bonds link cysteine 12/cysteine 26, cysteine 19/cysteine 30, and cysteine 25/cysteine 35. 6'-bromotryptophan is present on tryptophan 15. 4-carboxyglutamate occurs at positions 20 and 31. Tryptophan 38 carries the 6'-bromotryptophan modification.

It belongs to the conotoxin O2 superfamily. As to expression, expressed by the venom duct.

It localises to the secreted. Its function is as follows. Induces a sleep-like state in mice. The chain is Conotoxin r7a from Conus radiatus (Rayed cone).